A 207-amino-acid chain; its full sequence is LexA repressor (207 aa).

Residues 28-48 (VREIGEAVGLASSSTVHGHLA) constitute a DNA-binding region (H-T-H motif). Residues Ser-129 and Lys-167 each act as for autocatalytic cleavage activity in the active site.

Belongs to the peptidase S24 family. As to quaternary structure, homodimer.

It carries out the reaction Hydrolysis of Ala-|-Gly bond in repressor LexA.. Its function is as follows. Represses a number of genes involved in the response to DNA damage (SOS response), including recA and lexA. In the presence of single-stranded DNA, RecA interacts with LexA causing an autocatalytic cleavage which disrupts the DNA-binding part of LexA, leading to derepression of the SOS regulon and eventually DNA repair. The sequence is that of LexA repressor from Bacillus licheniformis (strain ATCC 14580 / DSM 13 / JCM 2505 / CCUG 7422 / NBRC 12200 / NCIMB 9375 / NCTC 10341 / NRRL NRS-1264 / Gibson 46).